A 324-amino-acid polypeptide reads, in one-letter code: Glyoxylate/hydroxypyruvate reductase B (324 aa).

Residues Arg-237 and Glu-266 contribute to the active site. His-285 serves as the catalytic Proton donor.

This sequence belongs to the D-isomer specific 2-hydroxyacid dehydrogenase family. GhrB subfamily. Homodimer.

The protein resides in the cytoplasm. The enzyme catalyses glycolate + NADP(+) = glyoxylate + NADPH + H(+). It carries out the reaction (R)-glycerate + NAD(+) = 3-hydroxypyruvate + NADH + H(+). The catalysed reaction is (R)-glycerate + NADP(+) = 3-hydroxypyruvate + NADPH + H(+). Functionally, catalyzes the NADPH-dependent reduction of glyoxylate and hydroxypyruvate into glycolate and glycerate, respectively. The polypeptide is Glyoxylate/hydroxypyruvate reductase B (Escherichia coli O17:K52:H18 (strain UMN026 / ExPEC)).